A 396-amino-acid chain; its full sequence is Decapping nuclease RAI1 (396 aa).

107 to 109 (YRG) lines the substrate pocket. Residue glutamate 179 coordinates a divalent metal cation. Glutamate 228 lines the substrate pocket. The a divalent metal cation site is built by aspartate 230, glutamate 249, and leucine 250. Substrate contacts are provided by lysine 251 and glutamine 275.

The protein belongs to the DXO/Dom3Z family. As to quaternary structure, interacts with RAT1; the interaction is direct, stabilizes RAT1 protein structure and stimulates its exoribonuclease activity. The interaction also stimulates RAI1 pyrophosphohydrolase activity, probably by recruiting it to mRNA substrates. A divalent metal cation is required as a cofactor.

Its subcellular location is the nucleus. The catalysed reaction is a 5'-end NAD(+)-phospho-ribonucleoside in mRNA + H2O = a 5'-end phospho-ribonucleoside in mRNA + NAD(+) + H(+). It catalyses the reaction a 5'-end (N(7)-methyl 5'-triphosphoguanosine)-ribonucleoside-ribonucleotide in mRNA + H2O = a (N(7)-methyl 5'-triphosphoguanosine)-nucleoside + a 5'-end phospho-ribonucleoside in mRNA + H(+). It carries out the reaction a 5'-end triphospho-ribonucleoside in mRNA + H2O = a 5'-end phospho-ribonucleoside in mRNA + diphosphate + H(+). In terms of biological role, decapping enzyme for NAD-capped RNAs: specifically hydrolyzes the nicotinamide adenine dinucleotide (NAD) cap from a subset of RNAs by removing the entire NAD moiety from the 5'-end of an NAD-capped RNA. The NAD-cap is present at the 5'-end of some RNAs and snoRNAs. In contrast to the canonical 5'-end N7 methylguanosine (m7G) cap, the NAD cap promotes mRNA decay. Also acts as a non-canonical decapping enzyme that removes the entire cap structure of m7G capped or incompletely capped RNAs. Has decapping activity toward incomplete 5'-end m7G cap mRNAs such as unmethylated 5'-end-capped RNA (cap0), while it has no activity toward 2'-O-ribose methylated m7G cap (cap1). Also possesses RNA 5'-pyrophosphohydrolase activity by hydrolyzing the 5'-end triphosphate to release pyrophosphates. Stimulates exoribonuclease activity of Rat1, allowing it to degrade RNAs with stable secondary structure more effectively. The polypeptide is Decapping nuclease RAI1 (Scheffersomyces stipitis (strain ATCC 58785 / CBS 6054 / NBRC 10063 / NRRL Y-11545) (Yeast)).